Reading from the N-terminus, the 388-residue chain is RNA binding motif protein, X-linked-like-1 (388 aa).

The RRM domain maps to 8 to 86; sequence GKLFIGGLNT…KAIKVEQATK (79 aa). Residues 61-80 show a composition bias toward basic and acidic residues; it reads DAKDVARDMNGKSLDGKAIK. A disordered region spans residues 61–388; it reads DAKDVARDMN…SDRGGGQKQI (328 aa). Lysine 80 participates in a covalent cross-link: Glycyl lysine isopeptide (Lys-Gly) (interchain with G-Cter in SUMO2). At serine 88 the chain carries Phosphoserine. The segment covering 148 to 161 has biased composition (pro residues); that stretch reads RGPPPRSGGPPPKR. 2 stretches are compositionally biased toward basic and acidic residues: residues 191–212 and 238–271; these read PRREPLPSRRDVYLSPRDDGYS and YTYRDYSHSSSRDDYPSRGYGDRDGYGRDREYSD. A compositionally biased stretch (low complexity) spans 320 to 332; it reads SRDSYSSSRSDLY. 2 stretches are compositionally biased toward basic and acidic residues: residues 333-344 and 377-388; these read SSDRDRVGRQER and SRSDRGGGQKQI.

It localises to the nucleus. RNA-binding protein which may be involved in pre-mRNA splicing. The polypeptide is RNA binding motif protein, X-linked-like-1 (Rbmxl1) (Rattus norvegicus (Rat)).